The sequence spans 296 residues: Probable AP endonuclease (296 aa).

C16 and C20 are joined by a disulfide. Residues H78, H115, E142, H182, H218, D231, H233, and E271 each contribute to the Zn(2+) site.

This sequence belongs to the AP endonuclease 2 family. Zn(2+) is required as a cofactor.

The protein resides in the host nucleus. The protein localises to the host cytoplasm. It localises to the virion. Its function is as follows. Endonuclease that plays a role in DNA repair. Cleaves phosphodiester bonds on the 5' side of apurinic or apyrimidinic sites (AP sites). In addition to endonuclease activity, the ASFV enzyme has a proofreading 3'-5' exonuclease activity that is considerably more efficient in the elimination of a mismatch than in that of a correctly paired base. Displays 3'-phosphatase and 3'-repair diesterase activities. The single nucleotide gaps generated by the AP endonuclease are filled by the viral AP endonuclease and DNA ligase. The polypeptide is Probable AP endonuclease (Ornithodoros (relapsing fever ticks)).